Here is a 511-residue protein sequence, read N- to C-terminus: Xylose import ATP-binding protein XylG (511 aa).

ABC transporter domains follow at residues 6–244 (LEMR…VGRE) and 261–506 (FEAR…IGKP). 38–45 (GENGAGKS) contacts ATP.

This sequence belongs to the ABC transporter superfamily. Xylose importer (TC 3.A.1.2.4) family. As to quaternary structure, the complex is composed of two ATP-binding proteins (XylG), two transmembrane proteins (XylH) and a solute-binding protein (XylF).

The protein localises to the cell inner membrane. It catalyses the reaction D-xylose(out) + ATP + H2O = D-xylose(in) + ADP + phosphate + H(+). Its function is as follows. Part of the ABC transporter complex XylFGH involved in xylose import. Responsible for energy coupling to the transport system. The polypeptide is Xylose import ATP-binding protein XylG (Brucella suis biovar 1 (strain 1330)).